A 411-amino-acid chain; its full sequence is Secretion apparatus protein BsaZ (411 aa).

The next 4 membrane-spanning stretches (helical) occupy residues 28–48, 80–100, 137–157, and 175–195; these read IVAL…VDLT, IAAP…LVQS, ALLY…LYHA, and IVLT…VLIL. The disordered stretch occupies residues 341–411; the sequence is AANRGGPPPE…APARTGDQNA (71 aa). A compositionally biased stretch (low complexity) spans 370–404; it reads DACADNAFPDDAPPGAAAPNAGSPDGPAPDGGAPA.

The protein belongs to the type III secretion exporter family.

It is found in the cell membrane. Part of the bsa type III secretion system, is involved in the intracellular replication of invading bacteria inside the host cell. Probably necessary for the lysis of the vacuole membrane and escape into the host cell cytoplasm. The sequence is that of Secretion apparatus protein BsaZ (bsaZ) from Burkholderia pseudomallei (strain 1710b).